The chain runs to 353 residues: 2-oxoglutarate-dependent dioxygenase phqC (353 aa).

One can recognise a Fe2OG dioxygenase domain in the interval 199–315; sequence CASELRLNNY…RRSCAFFLKA (117 aa). Positions 227, 229, and 287 each coordinate Fe cation. Arg302 is a 2-oxoglutarate binding site.

This sequence belongs to the iron/ascorbate-dependent oxidoreductase family. It depends on Fe(2+) as a cofactor.

Its pathway is alkaloid biosynthesis. Functionally, 2-oxoglutarate-dependent dioxygenase; part of the gene cluster that mediates the biosynthesis of paraherquamide, a fungal indole alkaloid that belongs to a family of natural products containing a characteristic bicyclo[2.2.2]diazaoctane core. The first steps in the biosynthesis of paraherquamide is the production of the beta-methyl-proline precursor from L-isoleucine. They require oxidation of a terminally hydroxylated L-isoleucine to the corresponding aldehyde by enzymes which have still to be identified. Spontaneous cyclization and dehydration would yield the 4-methyl pyrolline-5-carboxylic acid, which is then reduced by the pyrroline-5-carboxylate reductase phqD leading to the beta-methyl-proline precursor. The next step of paraherquamide biosynthesis involves coupling of beta-methyl-proline and L-tryptophan by the bimodular NRPS phqB, to produce a monooxopiperazine intermediate. The reductase (R) domain of phqB utilizes NADPH for hydride transfer to reduce the thioester bond of the T domain-tethered linear dipeptide to a hemithioaminal intermediate, which spontaneously cleaves the C-S bond to release the aldehyde product. This compound undergoes spontaneous cyclization and dehydration to give a dienamine which is reverse prenylated at C-2 by the reverse prenyltransferase phqJ. The other prenyltransferase present in the cluster, phqI may be a redundant gene in the pathway. During biosynthetic assembly, the key step to produce the polycyclic core is catalyzed by the bifunctional reductase and intramolecular [4+2] Diels-Alderase, phqE, resulting in formation of the [2.2.2] diazaoctane intermediate preparaherquamide. Following formation of preparaherquamide, an indole 2,3-epoxidation-initiated pinacol-like rearrangement is catalyzed by the phqK FAD-dependent monooxygenase. The prenyltransferase phqA, the cytochrome P450 monooxygenase phqL, and the FAD-linked oxidoreductase phqH (or the cytochrome P450 monooxygenase phqM), are proposed to be involved in the formation of the pyran ring. The FAD-dependent monooxygenase phqK is likely responsible for generation of the spiro-oxindole, and the N-methylation is likely mediated by the phqN methyltransferase leading to the isolable natural product paraherquamide F. However, the order of these biosynthetic steps has still to be determined. In late-stage paraherquamide biosynthesis, the third P450 monooxygenase, phqO, is probably responsible for the C-14 hydroxylation, transforming paraherquamide F to paraherquamide G, and paraherquamide E to the final product paraherquamide A. The expansion from the 6-membered ring pyran (in paraherquamides F and G) to the 7-membered dioxepin ring (in paraherquamides A and E) represents a poorly understood but intriguing process that probably involves the 2-oxoglutarate-dependent dioxygenase phqC. Finally, the remaining members of the paraherquamide cluster, including phqI as well as phqM (or phqH), do not have a clearly prescribed role and appear to be redundant. In Penicillium fellutanum, this protein is 2-oxoglutarate-dependent dioxygenase phqC.